Reading from the N-terminus, the 331-residue chain is Protoheme IX farnesyltransferase (331 aa).

8 helical membrane passes run 63 to 83, 109 to 129, 132 to 152, 160 to 180, 188 to 208, 215 to 235, 241 to 261, and 294 to 314; these read LACTLGGGALAAAAAGALNCL, SVFIGAVACTLVSSALLVSGV, LAAGLTLLGLCSYVLLYTAFL, IVFGGVAGAIPPLVGASAAAG, WLFSLVMVWTPAHFWALAILL, VGIPMLPTVSGPFVTAKAISV, VFLSFLGCFVLPEGGLLYGIL, and ILYMFGVCFLLVISRLQVSIV.

The protein belongs to the UbiA prenyltransferase family. Protoheme IX farnesyltransferase subfamily.

The protein resides in the cell inner membrane. It carries out the reaction heme b + (2E,6E)-farnesyl diphosphate + H2O = Fe(II)-heme o + diphosphate. It functions in the pathway porphyrin-containing compound metabolism; heme O biosynthesis; heme O from protoheme: step 1/1. Converts heme B (protoheme IX) to heme O by substitution of the vinyl group on carbon 2 of heme B porphyrin ring with a hydroxyethyl farnesyl side group. This is Protoheme IX farnesyltransferase from Prochlorococcus marinus (strain NATL2A).